A 127-amino-acid chain; its full sequence is Large ribosomal subunit protein bL17 (127 aa).

This sequence belongs to the bacterial ribosomal protein bL17 family. In terms of assembly, part of the 50S ribosomal subunit. Contacts protein L32.

The protein is Large ribosomal subunit protein bL17 of Leuconostoc citreum (strain KM20).